The primary structure comprises 448 residues: MSTAKDPGNGVYEILSLIFDFPSNEQRLWWHSTAPMFAAMLDNAGYNIHDQYRHLGIFKKHIIPFLGVYPTKDKERWLSILTRCGLPLELSLNCTDSVVRYTYEPINEVTGTEKDTFNTLAIMTSVQKLAQIQAGIDLEWFSYFKDELTLDESESATLQSNELVKEQIKTQNKLALDLKESQFALKVYFYPHLKSIATGKSTHDLIFDSVLKLSQKHDSIQPAFQVLCDYVSRRNHSAEVDQHGALHARLLSCDLIDPAKSRVKIYLLEKTVSLSVMEDLWTLGGQRVDASTMDGLDMLRELWSLLKVPTGHLEYPKGYLELGEIPNEQLPSMANYTLHHNDPMPEPQVYFTVFGMNDAEISNALTIFFQRHGFDDMAKNYRVFLQDSYPYHDFESLNYLHAYISFSYRRNKPYLSVYLHTFETGRWPVFADSPISFDAYRRCELSTK.

Residues 80–81 and Glu-89 contribute to the L-tryptophan site; that span reads IL. 3 residues coordinate substrate: Arg-100, Lys-186, and Tyr-188. L-tryptophan contacts are provided by Tyr-190 and Arg-249. Substrate contacts are provided by Arg-262, Lys-264, Tyr-266, Gln-348, Tyr-350, Tyr-414, and Tyr-418.

The protein belongs to the tryptophan dimethylallyltransferase family. In terms of assembly, homodimer.

The enzyme catalyses L-tryptophan + dimethylallyl diphosphate = 4-(3-methylbut-2-enyl)-L-tryptophan + diphosphate. The protein operates within alkaloid biosynthesis; ergot alkaloid biosynthesis. Its function is as follows. Tryptophan dimethylallyltransferase; part of the gene cluster that mediates the biosynthesis of fungal ergot alkaloid. DmaW catalyzes the first step of ergot alkaloid biosynthesis by condensing dimethylallyl diphosphate (DMAP) and tryptophan to form 4-dimethylallyl-L-tryptophan. The second step is catalyzed by the methyltransferase easF that methylates 4-dimethylallyl-L-tryptophan in the presence of S-adenosyl-L-methionine, resulting in the formation of 4-dimethylallyl-L-abrine. The catalase easC and the FAD-dependent oxidoreductase easE then transform 4-dimethylallyl-L-abrine to chanoclavine-I which is further oxidized by easD in the presence of NAD(+), resulting in the formation of chanoclavine-I aldehyde. Agroclavine dehydrogenase easG then mediates the conversion of chanoclavine-I aldehyde to agroclavine via a non-enzymatic adduct reaction: the substrate is an iminium intermediate that is formed spontaneously from chanoclavine-I aldehyde in the presence of glutathione. The presence of easA is not required to complete this reaction. Further conversion of agroclavine to paspalic acid is a two-step process involving oxidation of agroclavine to elymoclavine and of elymoclavine to paspalic acid, the second step being performed by the elymoclavine oxidase cloA. Paspalic acid is then further converted to D-lysergic acid. Ergopeptines are assembled from D-lysergic acid and three different amino acids by the D-lysergyl-peptide-synthetases composed each of a monomudular and a trimodular nonribosomal peptide synthetase subunit. LpsB and lpsC encode the monomodular subunits responsible for D-lysergic acid activation and incorporation into the ergopeptine backbone. LpsA1 and A2 subunits encode the trimodular nonribosomal peptide synthetase assembling the tripeptide portion of ergopeptines. LpsA1 is responsible for formation of the major ergopeptine, ergotamine, and lpsA2 for alpha-ergocryptine, the minor ergopeptine of the total alkaloid mixture elaborated by C.purpurea. D-lysergyl-tripeptides are assembled by the nonribosomal peptide synthetases and released as N-(D-lysergyl-aminoacyl)-lactams. Cyclolization of the D-lysergyl-tripeptides is performed by the Fe(2+)/2-ketoglutarate-dependent dioxygenase easH which introduces a hydroxyl group into N-(D-lysergyl-aminoacyl)-lactam at alpha-C of the aminoacyl residue followed by spontaneous condensation with the terminal lactam carbonyl group. The sequence is that of Tryptophan dimethylallyltransferase 1 from Claviceps purpurea (Ergot fungus).